The following is a 147-amino-acid chain: Riboflavin kinase (147 aa).

15-20 (GLGEGR) serves as a coordination point for CDP. Thr44 and Asn46 together coordinate Mg(2+). Positions 97 and 104 each coordinate FMN. Position 109-112 (109-112 (TELR)) interacts with CDP.

This sequence belongs to the archaeal riboflavin kinase family. It depends on Mg(2+) as a cofactor.

The catalysed reaction is riboflavin + CTP = CDP + FMN + H(+). It participates in cofactor biosynthesis; FMN biosynthesis; FMN from riboflavin (CTP route): step 1/1. Catalyzes the CTP-dependent phosphorylation of riboflavin (vitamin B2) to form flavin mononucleotide (FMN). The chain is Riboflavin kinase from Methanopyrus kandleri (strain AV19 / DSM 6324 / JCM 9639 / NBRC 100938).